The chain runs to 222 residues: Probable GTP-binding protein EngB (222 aa).

One can recognise an EngB-type G domain in the interval 23–217 (NASEIVFLGR…REEIVKYTLG (195 aa)). Residues 31–38 (GRSNVGKS), 57–61 (GKTQL), 82–85 (DLPG), 152–155 (TKAD), and 191–193 (FSA) contribute to the GTP site. Residues Ser-38 and Thr-59 each contribute to the Mg(2+) site.

This sequence belongs to the TRAFAC class TrmE-Era-EngA-EngB-Septin-like GTPase superfamily. EngB GTPase family. The cofactor is Mg(2+).

Necessary for normal cell division and for the maintenance of normal septation. The chain is Probable GTP-binding protein EngB from Helicobacter hepaticus (strain ATCC 51449 / 3B1).